Here is a 430-residue protein sequence, read N- to C-terminus: Protein translocase subunit SecY (430 aa).

The next 10 helical transmembrane spans lie at 18-38 (VIFT…PVPG), 67-87 (FSIF…MQLL), 118-138 (IVLG…FFPG), 145-165 (VSVY…LMWL), 177-197 (GISI…LNLI), 213-233 (IVVI…VIFV), 270-290 (VIPV…AGLF), 309-329 (PIGM…YTFI), 369-389 (FVGS…IKFA), and 390-410 (DLPQ…GVAL).

It belongs to the SecY/SEC61-alpha family. Component of the Sec protein translocase complex. Heterotrimer consisting of SecY, SecE and SecG subunits. The heterotrimers can form oligomers, although 1 heterotrimer is thought to be able to translocate proteins. Interacts with the ribosome. Interacts with SecDF, and other proteins may be involved. Interacts with SecA.

The protein resides in the cell membrane. The central subunit of the protein translocation channel SecYEG. Consists of two halves formed by TMs 1-5 and 6-10. These two domains form a lateral gate at the front which open onto the bilayer between TMs 2 and 7, and are clamped together by SecE at the back. The channel is closed by both a pore ring composed of hydrophobic SecY resides and a short helix (helix 2A) on the extracellular side of the membrane which forms a plug. The plug probably moves laterally to allow the channel to open. The ring and the pore may move independently. This is Protein translocase subunit SecY from Halalkalibacterium halodurans (strain ATCC BAA-125 / DSM 18197 / FERM 7344 / JCM 9153 / C-125) (Bacillus halodurans).